The sequence spans 147 residues: Small ribosomal subunit protein uS5 (147 aa).

Residues 9–72 form the S5 DRBM domain; that stretch reads FEEVIVDIGR…DDAFKNIIHV (64 aa).

The protein belongs to the universal ribosomal protein uS5 family. In terms of assembly, part of the 30S ribosomal subunit. Contacts proteins S4 and S8.

Functionally, with S4 and S12 plays an important role in translational accuracy. Its function is as follows. Located at the back of the 30S subunit body where it stabilizes the conformation of the head with respect to the body. The chain is Small ribosomal subunit protein uS5 from Campylobacter curvus (strain 525.92).